Consider the following 172-residue polypeptide: MNNLIAIGYVLGTFGIEGWVKVEPLTDHPQRFLNTERVFWEKEDEIFPLRIEEVQLQAERILVKFMEINDIKEANKLIFGYLKIPKNEIVQLKENEFYLFQLKGLTVYDLNYQKIGVVRTVLKNPANDLLVIDTIHDKELLLPFIKVFVKEVNLPEGFIKVELLPGMLEEKK.

The region spanning 94 to 167 is the PRC barrel domain; it reads ENEFYLFQLK…FIKVELLPGM (74 aa).

This sequence belongs to the RimM family. In terms of assembly, binds ribosomal protein uS19.

The protein resides in the cytoplasm. Its function is as follows. An accessory protein needed during the final step in the assembly of 30S ribosomal subunit, possibly for assembly of the head region. Essential for efficient processing of 16S rRNA. May be needed both before and after RbfA during the maturation of 16S rRNA. It has affinity for free ribosomal 30S subunits but not for 70S ribosomes. The chain is Ribosome maturation factor RimM from Carboxydothermus hydrogenoformans (strain ATCC BAA-161 / DSM 6008 / Z-2901).